A 366-amino-acid polypeptide reads, in one-letter code: Subtilisin-like protease het-Q2 (366 aa).

Residues 1–321 (MSAISHHSLS…RVLMALGEKT (321 aa)) form the Peptidase S8 domain. Aspartate 35 functions as the Charge relay system in the catalytic mechanism. Residues 79 to 98 (DFCQPSPPGDRQGPPPQPHS) are disordered. Over residues 83–96 (PSPPGDRQGPPPQP) the composition is skewed to pro residues. Catalysis depends on charge relay system residues histidine 105 and serine 266. Residues 261-283 (LVSGSSFATPVVVSVAALVLAFV) form a helical membrane-spanning segment.

Belongs to the peptidase S8 family.

The protein localises to the membrane. Serine protease involved in heterokaryon incompatibility, a process that ensures that during spontaneous vegetative cell fusion, only compatible cells from the same colony survive (non-self-recognition). In P.anserina, the het-q locus exists as 2 incompatible alleles, het-Q1 (AC B2AXJ5) and het-Q2 (this entry). Prevents cell fusion with strains containing the gasdermin-like protein het-Q1 by mediating proteolytic cleavage and maturation of het-Q1 during the allorecognition process, thereby triggering cell death. This is Subtilisin-like protease het-Q2 from Podospora anserina (Pleurage anserina).